The following is a 95-amino-acid chain: Aspartyl/glutamyl-tRNA(Asn/Gln) amidotransferase subunit C (95 aa).

The protein belongs to the GatC family. In terms of assembly, heterotrimer of A, B and C subunits.

The catalysed reaction is L-glutamyl-tRNA(Gln) + L-glutamine + ATP + H2O = L-glutaminyl-tRNA(Gln) + L-glutamate + ADP + phosphate + H(+). It catalyses the reaction L-aspartyl-tRNA(Asn) + L-glutamine + ATP + H2O = L-asparaginyl-tRNA(Asn) + L-glutamate + ADP + phosphate + 2 H(+). Allows the formation of correctly charged Asn-tRNA(Asn) or Gln-tRNA(Gln) through the transamidation of misacylated Asp-tRNA(Asn) or Glu-tRNA(Gln) in organisms which lack either or both of asparaginyl-tRNA or glutaminyl-tRNA synthetases. The reaction takes place in the presence of glutamine and ATP through an activated phospho-Asp-tRNA(Asn) or phospho-Glu-tRNA(Gln). The protein is Aspartyl/glutamyl-tRNA(Asn/Gln) amidotransferase subunit C of Cereibacter sphaeroides (strain ATCC 17025 / ATH 2.4.3) (Rhodobacter sphaeroides).